A 141-amino-acid chain; its full sequence is Hemoglobin subunit alpha-3 (141 aa).

Positions 1–141 (VLSPADKTNV…VSTVLTSKYR (141 aa)) constitute a Globin domain. Position 58 (His58) interacts with O2. Residue His87 coordinates heme b.

This sequence belongs to the globin family. In terms of assembly, heterotetramer of two alpha chains and two beta chains. Red blood cells.

In terms of biological role, involved in oxygen transport from the lung to the various peripheral tissues. This is Hemoglobin subunit alpha-3 from Pan troglodytes (Chimpanzee).